We begin with the raw amino-acid sequence, 243 residues long: Ribosomal RNA small subunit methyltransferase J (243 aa).

Residues 112–113 (ER) and Asp-164 contribute to the S-adenosyl-L-methionine site.

The protein belongs to the methyltransferase superfamily. RsmJ family.

Its subcellular location is the cytoplasm. The catalysed reaction is guanosine(1516) in 16S rRNA + S-adenosyl-L-methionine = N(2)-methylguanosine(1516) in 16S rRNA + S-adenosyl-L-homocysteine + H(+). Its function is as follows. Specifically methylates the guanosine in position 1516 of 16S rRNA. In Legionella pneumophila (strain Corby), this protein is Ribosomal RNA small subunit methyltransferase J.